Reading from the N-terminus, the 383-residue chain is Delta(12)-fatty-acid desaturase FAD2 (383 aa).

The next 2 helical transmembrane spans lie at 56–76 (VVYD…YFHL) and 84–104 (VAWP…WVIA). Positions 105–109 (HECGH) match the Histidine box-1 motif. Residues 117–137 (LLDDIVGLVLHSCLLVPYFSW) form a helical membrane-spanning segment. The Histidine box-2 signature appears at 141-145 (HRRHH). Transmembrane regions (helical) follow at residues 179–199 (LFTL…FNVS), 225–245 (IYIS…LAAA), and 249–269 (AWVI…LVMI). A Histidine box-3 motif is present at residues 315 to 319 (HVAHH).

The protein belongs to the fatty acid desaturase type 1 family. In terms of tissue distribution, expressed in leaves and seeds.

The protein localises to the endoplasmic reticulum membrane. It carries out the reaction (9Z)-octadecenoyl-CoA + 2 Fe(II)-[cytochrome b5] + O2 + 2 H(+) = (9Z,12Z)-octadecadienoyl-CoA + 2 Fe(III)-[cytochrome b5] + 2 H2O. The catalysed reaction is (9Z)-hexadecenoyl-CoA + 2 Fe(II)-[cytochrome b5] + O2 + 2 H(+) = (9Z,12Z)-hexadecadienoyl-CoA + 2 Fe(III)-[cytochrome b5] + 2 H2O. Its pathway is lipid metabolism; polyunsaturated fatty acid biosynthesis. Catalyzes the desaturation of oleic acid (18:1(9Z)) to linoleic acid (18:2(9Z,12Z)). The chain is Delta(12)-fatty-acid desaturase FAD2 from Vernicia fordii (Tung).